Here is a 512-residue protein sequence, read N- to C-terminus: Maturase K (512 aa).

The protein belongs to the intron maturase 2 family. MatK subfamily.

It localises to the plastid. It is found in the chloroplast. Its function is as follows. Usually encoded in the trnK tRNA gene intron. Probably assists in splicing its own and other chloroplast group II introns. This Lemna aequinoctialis (Lesser duckweed) protein is Maturase K.